We begin with the raw amino-acid sequence, 93 residues long: Alpha-defensin 9 (93 aa).

Positions 1-19 (MKTLVLLSALVLLAFQVQA) are cleaved as a signal peptide. Residues 20–58 (DPIQNTDEETKTEEQPGEEDQAVSVSFGDPEGSSLQEES) constitute a propeptide that is removed on maturation. The interval 23-56 (QNTDEETKTEEQPGEEDQAVSVSFGDPEGSSLQE) is disordered. Intrachain disulfides connect C64/C92, C66/C81, and C71/C91.

Belongs to the alpha-defensin family. As to expression, paneth cells of the small bowel.

Its subcellular location is the secreted. In terms of biological role, probably contributes to the antimicrobial barrier function of the small bowel mucosa. The protein is Alpha-defensin 9 (Defa9) of Mus musculus (Mouse).